Reading from the N-terminus, the 506-residue chain is COP9 signalosome complex subunit 2 (506 aa).

The PCI domain maps to 252–420 (SEENWEEAQS…GTVVVESASD (169 aa)). Over residues 482–491 (SGHRFRRGGK) the composition is skewed to basic residues. The interval 482–506 (SGHRFRRGGKGSKAGGGLGMKTGLF) is disordered. Positions 492–506 (GSKAGGGLGMKTGLF) are enriched in gly residues.

The protein belongs to the CSN2 family. In terms of assembly, component of the COP9 signalosome (CSN) complex.

The protein localises to the cytoplasm. Its subcellular location is the nucleus. Its function is as follows. Component of the COP9 signalosome (CSN) complex that acts as an regulator of the ubiquitin (Ubl) conjugation pathway by mediating the deneddylation of the cullin subunit of SCF-type E3 ubiquitin-protein ligase complexes. The CSN complex seems to link protein degradation to sexual development. Required for fruit body formation. The polypeptide is COP9 signalosome complex subunit 2 (csnB) (Emericella nidulans (strain FGSC A4 / ATCC 38163 / CBS 112.46 / NRRL 194 / M139) (Aspergillus nidulans)).